Here is a 594-residue protein sequence, read N- to C-terminus: DNA mismatch repair protein MutL (594 aa).

This sequence belongs to the DNA mismatch repair MutL/HexB family.

Functionally, this protein is involved in the repair of mismatches in DNA. It is required for dam-dependent methyl-directed DNA mismatch repair. May act as a 'molecular matchmaker', a protein that promotes the formation of a stable complex between two or more DNA-binding proteins in an ATP-dependent manner without itself being part of a final effector complex. This chain is DNA mismatch repair protein MutL, found in Rhizorhabdus wittichii (strain DSM 6014 / CCUG 31198 / JCM 15750 / NBRC 105917 / EY 4224 / RW1) (Sphingomonas wittichii).